The following is a 138-amino-acid chain: Large ribosomal subunit protein uL16 (138 aa).

The segment covering 1-16 (MLIPKRVKYRRQHRPT) has biased composition (basic residues). Positions 1 to 23 (MLIPKRVKYRRQHRPTRSGVSKG) are disordered.

This sequence belongs to the universal ribosomal protein uL16 family. Part of the 50S ribosomal subunit.

In terms of biological role, binds 23S rRNA and is also seen to make contacts with the A and possibly P site tRNAs. The polypeptide is Large ribosomal subunit protein uL16 (Corynebacterium aurimucosum (strain ATCC 700975 / DSM 44827 / CIP 107346 / CN-1) (Corynebacterium nigricans)).